Reading from the N-terminus, the 38-residue chain is HSDATFTAEYSKLLAKLALQKYLESILGSSTSPRPPSS.

O-linked (HexNAc...) serine; in Exendin-1 and Exendin-1b glycosylation is present at serine 32.

It belongs to the glucagon family. Post-translationally, O-linked glycan consists of Hex-HexNAc saccharide. Glycosylation may be of interest for the biological stability of exendin-1 and exendin-1b. As to expression, expressed by the venom gland.

The protein resides in the secreted. Functionally, O-linked and free exendin-1 and exendin-1b have vasoactive intestinal peptide(VIP)/secretin-like biological activities. They interact with rat and human VIP receptors 1 (VIPR1) and 2 (VIPR2), with the highest affinity for the human VIPR2. They induce hypotension that is mediated by relaxation of cardiac smooth muscle. The polypeptide is Exendin-1 (Heloderma horridum horridum (Mexican beaded lizard)).